The sequence spans 455 residues: Vimentin (455 aa).

The head stretch occupies residues 1–87 (MASRTNTSSY…GLADAINTEF (87 aa)). Residues 87 to 122 (FKTNRTNEKAEMQHLNDRFASYIDKVRFLEQQNKIL) are a coiled coil. The tract at residues 88-122 (KTNRTNEKAEMQHLNDRFASYIDKVRFLEQQNKIL) is coil 1A. Positions 94–402 (EKAEMQHLND…KLLEGEESRI (309 aa)) constitute an IF rod domain. The tract at residues 123–144 (IAELEQMRGKGSSRVGDLYQDE) is linker 1. Residues 145–236 (MRELRRQVDQ…KLHDEELAEL (92 aa)) adopt a coiled-coil conformation. Residues 145–236 (MRELRRQVDQ…KLHDEELAEL (92 aa)) are coil 1B. Residues 237-259 (QIQIQEQHVQIDMEVAKPDLTAA) form a linker 12 region. The coil 2 stretch occupies residues 260-398 (LKDVRQQYET…ATYRKLLEGE (139 aa)). The stretch at 294 to 398 (ARNNEAIRLA…ATYRKLLEGE (105 aa)) forms a coiled coil. The tract at residues 399–455 (ESRITTPFPNLSSLTLRETMKETRPAMDSLSKKVVIKTIETRDGHIINESSQNDDLE) is tail.

This sequence belongs to the intermediate filament family. As to quaternary structure, homomer assembled from elementary dimers. One of the most prominent phosphoproteins in various cells of mesenchymal origin. Phosphorylation is enhanced during cell division, at which time vimentin filaments are significantly reorganized.

Its subcellular location is the cytoplasm. The protein resides in the cytoskeleton. The protein localises to the nucleus matrix. Functionally, vimentins are class-III intermediate filaments found in various non-epithelial cells, especially mesenchymal cells. Vimentin is attached to the nucleus, endoplasmic reticulum, and mitochondria, either laterally or terminally. The sequence is that of Vimentin (vim) from Cyprinus carpio (Common carp).